Here is a 438-residue protein sequence, read N- to C-terminus: Coenzyme A disulfide reductase (438 aa).

FAD is bound at residue 8–33; the sequence is GAVAGGATCASQIRRLDKESEIIVFE. Substrate contacts are provided by Thr-15, Gln-19, Arg-22, Ser-39, and Asn-42. Cys-43 serves as the catalytic Nucleophile. The active-site Redox-active is the Cys-43. Lys-71 contributes to the substrate binding site. 151-166 lines the NADP(+) pocket; sequence ALVVGAGYISLEVLEN. 267-277 is a binding site for FAD; that stretch reads TNIPNIYALGD. His-299 lines the substrate pocket. Tyr-419 is an FAD binding site. Lys-427 contacts substrate.

This sequence belongs to the class-III pyridine nucleotide-disulfide oxidoreductase family. Homodimer. It depends on FAD as a cofactor.

It catalyses the reaction NADP(+) + 2 CoA = CoA-disulfide + NADPH + H(+). Its function is as follows. Catalyzes specifically the NADPH-dependent reduction of coenzyme A disulfide. The protein is Coenzyme A disulfide reductase of Staphylococcus epidermidis (strain ATCC 35984 / DSM 28319 / BCRC 17069 / CCUG 31568 / BM 3577 / RP62A).